The sequence spans 542 residues: GPI alpha-1,2-mannosyltransferase 3 (542 aa).

Residues 1–36 (MESQAADYNPASRNLHGSSGEMKLRRRKSRQYVSAQ) are disordered. A run of 8 helical transmembrane segments spans residues 52–72 (LVLFTIALRILNCFLVQTSFV), 125–145 (VQFLIWIPRLGQALLSAVADI), 213–233 (LVALACVVRPTALIPWVPLLF), 244–264 (HLTLHHFLPVGFITFSLSLII), 304–324 (GFPVVLGTHLPFFIHGCFLAP), 327–347 (LHILLLTVLWTLLVYSMLGHK), 351–371 (FIYPVLPFCMVFCGYSLAHLK), and 376–396 (AALSFLLLSNVPLAFYTGLVH). N-linked (GlcNAc...) asparagine glycosylation is present at Asn480.

This sequence belongs to the glycosyltransferase 22 family. PIGB subfamily.

It localises to the endoplasmic reticulum membrane. Its pathway is glycolipid biosynthesis; glycosylphosphatidylinositol-anchor biosynthesis. In terms of biological role, alpha-1,2-mannosyltransferase that catalyzes the transfer of the third mannose, via an alpha-1,2 bond, from a dolichol-phosphate-mannose (Dol-P-Man) to an alpha-D-Man-(1-&gt;6)-2-PEtn-alpha-D-Man-(1-&gt;4)-alpha-D-GlcN-(1-&gt;6)-(1-radyl,2-acyl-sn-glycero-3-phospho)-2-acyl-inositol intermediate to generate an alpha-D-Man-(1-&gt;2)-alpha-D-Man-(1-&gt;6)-2-PEtn-alpha-D-Man-(1-&gt;4)-alpha-D-GlcN-(1-&gt;6)-(1-radyl,2-acyl-sn-glycero-3-phospho)-2-acyl-inositol (also termed H6) and participates in the nineth step of the glycosylphosphatidylinositol-anchor biosynthesis. May also add the third mannose to an alpha-D-Man-(1-&gt;6)-alpha-D-Man-(1-&gt;4)-alpha-D-GlcN-(1-&gt;6)-(1-radyl,2-acyl-sn-glycero-3-phospho)-2-acyl-inositol (also termed H3) intermediate generating an alpha-D-Man-(1-&gt;2)-alpha-D-Man-(1-&gt;6)-alpha-D-Man-(1-&gt;4)-alpha-D-GlcN-(1-&gt;6)-(1-radyl,2-acyl-sn-glycero-3-phospho)-2-acyl-inositol (also termed H4). The polypeptide is GPI alpha-1,2-mannosyltransferase 3 (Mus musculus (Mouse)).